The following is a 355-amino-acid chain: Isopentenyl-diphosphate delta-isomerase (355 aa).

6-7 serves as a coordination point for substrate; it reads RK. FMN is bound by residues 62 to 64, serine 93, and asparagine 122; that span reads AMT. Residue glutamine 152 coordinates substrate. Glutamate 153 is a Mg(2+) binding site. Residues lysine 184, threonine 214, 258–259, and 280–281 contribute to the FMN site; these read GG and AG.

Belongs to the IPP isomerase type 2 family. In terms of assembly, homooctamer. Dimer of tetramers. It depends on FMN as a cofactor. NADPH serves as cofactor. The cofactor is Mg(2+).

The protein localises to the cytoplasm. It carries out the reaction isopentenyl diphosphate = dimethylallyl diphosphate. In terms of biological role, involved in the biosynthesis of isoprenoids. Catalyzes the 1,3-allylic rearrangement of the homoallylic substrate isopentenyl (IPP) to its allylic isomer, dimethylallyl diphosphate (DMAPP). The protein is Isopentenyl-diphosphate delta-isomerase of Bacillus pumilus (strain SAFR-032).